The sequence spans 60 residues: Large ribosomal subunit protein bL32 (60 aa).

The segment at M1–K21 is disordered. A compositionally biased stretch (basic residues) spans H7 to Y20.

Belongs to the bacterial ribosomal protein bL32 family.

The sequence is that of Large ribosomal subunit protein bL32 from Streptococcus uberis (strain ATCC BAA-854 / 0140J).